The sequence spans 402 residues: Propionate kinase (402 aa).

The ATP site is built by N11 and K18. N11 serves as a coordination point for Mg(2+). A substrate-binding site is contributed by R86. The Proton donor/acceptor role is filled by D143. ATP contacts are provided by residues H175, 203–207, 278–280, and 326–330; these read HLGNG, DLR, and GIGEN.

This sequence belongs to the acetokinase family. TdcD subfamily. Homodimer. It depends on Mg(2+) as a cofactor.

It catalyses the reaction propanoate + ATP = propanoyl phosphate + ADP. It functions in the pathway amino-acid degradation; L-threonine degradation via propanoate pathway; propanoate from L-threonine: step 4/4. In terms of biological role, catalyzes the conversion of propionyl phosphate and ADP to propionate and ATP. This is Propionate kinase from Salmonella typhimurium (strain D23580).